The chain runs to 466 residues: MTYAPVSDVLSGKLAVDSEVTVRGWIRSRRDSKAGISFLAIYDGSCFDPIQAVVPNNLNNYDNEVLKLTTGCSVEVTGKIVESPAQGQDFELAATDVKVVGWVEDAETYPMAKTRHSIEYLREVAHLRPRTNVIGAVARVRNCLSQAIHRFYHEQGYFWVSAPLITASDAEGAGEMFRVSTLDMENLPRTDAGKVDYNEDFFGKETFLTVSGQLNAEAYACALSKVYTFGPTFRAENSNTSRHLAEFWMVEPEVAFAELDDVAKLAEDMLKYVFKAVLEERRDDLEFFAQRIDKQAITRLEQFVSSDFAQVDYTDAIQILLDSGREFEFPVEWGIDMSSEHERFLAEEHFKAPVIVKNYPKDIKAFYMRMNDDGKTVAAMDVLAPGIGEIIGGSQREERLDVLDARMREMGIDPEHMSWYRDLRRYGTVPHAGFGLGFERLVSYVTGMGNVRDVIPFPRTPRSANF.

This sequence belongs to the class-II aminoacyl-tRNA synthetase family. As to quaternary structure, homodimer.

The protein resides in the cytoplasm. The catalysed reaction is tRNA(Asn) + L-asparagine + ATP = L-asparaginyl-tRNA(Asn) + AMP + diphosphate + H(+). This chain is Asparagine--tRNA ligase, found in Vibrio parahaemolyticus serotype O3:K6 (strain RIMD 2210633).